The chain runs to 81 residues: Three-finger toxin MALT0051C (81 aa).

Positions 1–21 are cleaved as a signal peptide; it reads MKTLLLTLVVVTVVCLDFGHT. Intrachain disulfides connect Cys24–Cys43, Cys38–Cys60, Cys62–Cys73, and Cys74–Cys79.

This sequence belongs to the three-finger toxin family. Short-chain subfamily. Type I alpha-neurotoxin sub-subfamily. Expressed by the venom gland.

It localises to the secreted. Its function is as follows. Binds to muscle nicotinic acetylcholine receptor (nAChR) and inhibit acetylcholine from binding to the receptor, thereby impairing neuromuscular transmission. This chain is Three-finger toxin MALT0051C, found in Micrurus altirostris (Uruguayan coral snake).